The following is a 168-amino-acid chain: Plasma membrane-associated cation-binding protein 2 (168 aa).

Gly-2 carries N-myristoyl glycine lipidation. 7 repeat units span residues 26–30, 69–73, 94–99, 103–107, 110–115, 118–122, and 124–129. A 7 X 5 AA approximate repeats of V-E-E-K-K region spans residues 26 to 129; the sequence is VEEEKPREVE…EKKPVEEEKK (104 aa). A coiled-coil region spans residues 56-77; sequence EEIIATGEKEIEIVEEKKEEAK. Positions 88–131 are enriched in basic and acidic residues; it reads EEKKPAVEEEKKTAPVEEKKPAVEEEKKPAVEEKKPVEEEKKEV. The segment at 88–168 is disordered; the sequence is EEKKPAVEEE…ETPAAAPQKA (81 aa). Residues 152–168 show a composition bias toward low complexity; that stretch reads ETPAKAPETPAAAPQKA.

This sequence belongs to the DREPP family. Binds microtubules. Interacts with calcium ion Ca(2+), calmodulin and some phosphatidylinositol phosphates (PtdInsPs) such as phosphatidylinositol 3,5-bisphosphate [PtdIns(3,5)P(2)], PtdIns(4,5)P(2) and PtdIns(3,4,5)P(3). Requires Cu(2+) as cofactor. As to expression, mostly expressed in the expanding cells, specifically in roots (except in root tips) and flowers (at protein level). Also detected in cotyledons, hypocotyls and trichome stalks.

The protein localises to the cell membrane. The protein resides in the cytoplasm. Its subcellular location is the cytoskeleton. In terms of biological role, may be involved in intracellular signaling through interaction with PtdInsPs and calmodulin (CaM); may keep PtdInsPs attached to the plasma membrane until Ca(2+)-CaM reaches a competitive concentration subsequent to an increase triggered by a stimulus, thus leading to PtdInsPs release and subsequent activation of InsPs-dependent signaling cascade. Binds to microtubules and inhibits tubulin polymerization. Regulates directional cell growth and cortical microtubule organization by destabilizing microtubules (e.g. in cotyledon pavement cells). This chain is Plasma membrane-associated cation-binding protein 2, found in Arabidopsis thaliana (Mouse-ear cress).